The primary structure comprises 947 residues: Vacuolar membrane protease (947 aa).

Residues Met-1–Lys-15 are Cytoplasmic-facing. A helical membrane pass occupies residues Thr-16–Asp-36. Topologically, residues Arg-37–Lys-358 are vacuolar. Residues Asn-46, Asn-92, Asn-108, and Asn-121 are each glycosylated (N-linked (GlcNAc...) asparagine). The Zn(2+) site is built by His-156 and Asp-168. Residue Glu-200 is the Proton acceptor of the active site. 3 residues coordinate Zn(2+): Glu-201, Glu-226, and His-300. A glycan (N-linked (GlcNAc...) asparagine) is linked at Asn-319. Residues His-359 to Ala-379 form a helical membrane-spanning segment. Residues His-380–Arg-391 are Cytoplasmic-facing. Residues Leu-392–Thr-412 form a helical membrane-spanning segment. Over Lys-413 to Arg-428 the chain is Vacuolar. The chain crosses the membrane as a helical span at residues Thr-429–Ala-449. Residues Glu-450 to Tyr-458 lie on the Cytoplasmic side of the membrane. A helical transmembrane segment spans residues Lys-459–Leu-479. Over Arg-480–Thr-489 the chain is Vacuolar. A helical membrane pass occupies residues Gly-490 to Phe-510. The Cytoplasmic segment spans residues Gly-511 to Tyr-601. 2 stretches are compositionally biased toward polar residues: residues Asn-522–Gln-531 and Asn-546–His-567. The segment at Asn-522–Val-573 is disordered. The chain crosses the membrane as a helical span at residues Asn-602–Leu-622. Residues Asp-623–Gln-641 lie on the Vacuolar side of the membrane. Residues Leu-642–Ile-662 form a helical membrane-spanning segment. The Cytoplasmic portion of the chain corresponds to Ser-663–Ser-669. A helical transmembrane segment spans residues Ser-670 to Phe-690. Residues Ser-691–Leu-947 lie on the Vacuolar side of the membrane. N-linked (GlcNAc...) asparagine glycosylation is found at Asn-742, Asn-784, Asn-801, and Asn-833.

Belongs to the peptidase M28 family. It depends on Zn(2+) as a cofactor.

The protein localises to the vacuole membrane. In terms of biological role, may be involved in vacuolar sorting and osmoregulation. This is Vacuolar membrane protease from Candida glabrata (strain ATCC 2001 / BCRC 20586 / JCM 3761 / NBRC 0622 / NRRL Y-65 / CBS 138) (Yeast).